The primary structure comprises 391 residues: BRCA1-A complex subunit Abraxas 1 (391 aa).

The MPN domain occupies 8–156; the sequence is VRISGFVLSS…THRLEFSAFI (149 aa). Positions 223–261 form a coiled coil; it reads LLAEMQKVCVEVEKSERTVEKLQEDIAQLKEAIGKQKTH. A disordered region spans residues 354–391; that stretch reads QRLKRKRKTREVSESASESGSDTEIEMNGQSGSNSPVF. Residues 367–391 show a composition bias toward polar residues; sequence ESASESGSDTEIEMNGQSGSNSPVF. Position 388 is a phosphoserine (S388). The short motif at 388-391 is the pSXXF motif element; the sequence is SPVF.

The protein belongs to the FAM175 family. Abraxas subfamily. In terms of assembly, component of the ARISC complex. Component of the BRCA1-A complex. Homodimer. In terms of processing, phosphorylation of Ser-388 of the pSXXF motif by ATM or ATR constitutes a specific recognition motif for the BRCT domain of BRCA1.

Its subcellular location is the nucleus. Functionally, involved in DNA damage response and double-strand break (DSB) repair. Component of the BRCA1-A complex, acting as a central scaffold protein that assembles the various components of the complex. The BRCA1-A complex specifically recognizes 'Lys-63'-linked ubiquitinated histones H2A and H2AX at DNA lesion sites. This complex also possesses deubiquitinase activity that specifically removes 'Lys-63'-linked ubiquitin on histones H2A and H2AX. In Danio rerio (Zebrafish), this protein is BRCA1-A complex subunit Abraxas 1.